The sequence spans 555 residues: Glypican-6 (555 aa).

The N-terminal stretch at 1 to 23 is a signal peptide; the sequence is MPSWIGAVILPLLGLLLSLPAGA. Residues 348-357 are compositionally biased toward low complexity; that stretch reads PALRSARSAP. Disordered stretches follow at residues 348-376 and 480-501; these read PALR…PTTA and GNDV…GSGC. A lipid anchor (GPI-anchor amidated serine) is attached at Ser-529. Residues 530–555 constitute a propeptide, removed in mature form; the sequence is SAAQRGHSLLSWSLTCIVLALQRLCR.

It belongs to the glypican family. In terms of tissue distribution, widely expressed. High expression in fetal kidney and lung and lower expressions in fetal liver and brain. In adult tissues, very abundant in ovary, high levels also observed in liver, kidney, small intestine and colon. Not detected in peripheral blood leukocytes. Detected in breast cancer cells (at protein level).

Its subcellular location is the cell membrane. It localises to the secreted. The protein localises to the extracellular space. In terms of biological role, cell surface proteoglycan that bears heparan sulfate. Putative cell surface coreceptor for growth factors, extracellular matrix proteins, proteases and anti-proteases. Enhances migration and invasion of cancer cells through WNT5A signaling. The polypeptide is Glypican-6 (GPC6) (Homo sapiens (Human)).